Consider the following 29-residue polypeptide: Brevinin-2Ra (29 aa).

Cys23 and Cys29 are oxidised to a cystine.

As to expression, expressed by the skin glands.

The protein resides in the secreted. Antimicrobial peptide. This Pelophylax ridibundus (Marsh frog) protein is Brevinin-2Ra.